The sequence spans 1014 residues: DNA translocase FtsK 2 (1014 aa).

The helical transmembrane segment at 1 to 21 threads the bilayer; the sequence is MFWIVLIVILLLALAGLFFVR. 3 disordered regions span residues 89 to 142, 283 to 318, and 487 to 525; these read ESEP…EDIA, RHAG…RRRV, and SQAV…AVSE. Over residues 121-140 the composition is skewed to acidic residues; the sequence is EEAETEEAEAAEEEAADTED. The segment covering 298–307 has biased composition (polar residues); the sequence is DVSQGQSVSD. Residues 662 to 871 form the FtsK domain; sequence GQPVVTDLGK…FQVSSKIDSR (210 aa). 682–687 contacts ATP; sequence GSGKSV.

This sequence belongs to the FtsK/SpoIIIE/SftA family. As to quaternary structure, homohexamer. Forms a ring that surrounds DNA.

It localises to the cell inner membrane. Functionally, essential cell division protein that coordinates cell division and chromosome segregation. The N-terminus is involved in assembly of the cell-division machinery. The C-terminus functions as a DNA motor that moves dsDNA in an ATP-dependent manner towards the dif recombination site, which is located within the replication terminus region. Translocation stops specifically at Xer-dif sites, where FtsK interacts with the Xer recombinase, allowing activation of chromosome unlinking by recombination. FtsK orienting polar sequences (KOPS) guide the direction of DNA translocation. FtsK can remove proteins from DNA as it translocates, but translocation stops specifically at XerCD-dif site, thereby preventing removal of XerC and XerD from dif. The sequence is that of DNA translocase FtsK 2 (ftsK2) from Neisseria meningitidis serogroup A / serotype 4A (strain DSM 15465 / Z2491).